We begin with the raw amino-acid sequence, 601 residues long: UvrABC system protein C (601 aa).

In terms of domain architecture, GIY-YIG spans 15-94 (LQPGVYLFKN…IKSYKPRYNI (80 aa)). One can recognise a UVR domain in the interval 202–237 (QEIVREKEKEMAMAARSLEFEKAARLRDQIQSLRQL).

It belongs to the UvrC family. As to quaternary structure, interacts with UvrB in an incision complex.

The protein localises to the cytoplasm. In terms of biological role, the UvrABC repair system catalyzes the recognition and processing of DNA lesions. UvrC both incises the 5' and 3' sides of the lesion. The N-terminal half is responsible for the 3' incision and the C-terminal half is responsible for the 5' incision. The protein is UvrABC system protein C of Syntrophomonas wolfei subsp. wolfei (strain DSM 2245B / Goettingen).